The following is a 455-amino-acid chain: F-box/FBD/LRR-repeat protein At3g51530 (455 aa).

Positions 1-26 (MKNSERFSAAKPLMEQGGKSSRKPGF) are disordered. One can recognise an F-box domain in the interval 29–75 (EDRISELPEVLLLQILSSLPTKLVISTSVLSKRWLSLWKMVQRLEFE). LRR repeat units lie at residues 80 to 106 (IYDF…HLKV), 155 to 182 (ETLK…HLLS), 183 to 208 (VVYK…VLRR), 227 to 257 (TLLL…GIES), 277 to 302 (IRNV…SLDL), and 325 to 351 (THKV…KLID). The region spanning 370–417 (KWNQPKYVPECLETFMWRNCNWGREEEKEVATYILRNARQLKKATFST) is the FBD domain.

The polypeptide is F-box/FBD/LRR-repeat protein At3g51530 (Arabidopsis thaliana (Mouse-ear cress)).